A 226-amino-acid polypeptide reads, in one-letter code: 2-C-methyl-D-erythritol 4-phosphate cytidylyltransferase (226 aa).

The protein belongs to the IspD/TarI cytidylyltransferase family. IspD subfamily.

The catalysed reaction is 2-C-methyl-D-erythritol 4-phosphate + CTP + H(+) = 4-CDP-2-C-methyl-D-erythritol + diphosphate. It functions in the pathway isoprenoid biosynthesis; isopentenyl diphosphate biosynthesis via DXP pathway; isopentenyl diphosphate from 1-deoxy-D-xylulose 5-phosphate: step 2/6. In terms of biological role, catalyzes the formation of 4-diphosphocytidyl-2-C-methyl-D-erythritol from CTP and 2-C-methyl-D-erythritol 4-phosphate (MEP). This is 2-C-methyl-D-erythritol 4-phosphate cytidylyltransferase from Prochlorococcus marinus (strain SARG / CCMP1375 / SS120).